The primary structure comprises 220 residues: Deoxyribose-phosphate aldolase (220 aa).

Aspartate 89 (proton donor/acceptor) is an active-site residue. Residue lysine 151 is the Schiff-base intermediate with acetaldehyde of the active site. Lysine 180 serves as the catalytic Proton donor/acceptor.

This sequence belongs to the DeoC/FbaB aldolase family. DeoC type 1 subfamily.

Its subcellular location is the cytoplasm. The enzyme catalyses 2-deoxy-D-ribose 5-phosphate = D-glyceraldehyde 3-phosphate + acetaldehyde. Its pathway is carbohydrate degradation; 2-deoxy-D-ribose 1-phosphate degradation; D-glyceraldehyde 3-phosphate and acetaldehyde from 2-deoxy-alpha-D-ribose 1-phosphate: step 2/2. In terms of biological role, catalyzes a reversible aldol reaction between acetaldehyde and D-glyceraldehyde 3-phosphate to generate 2-deoxy-D-ribose 5-phosphate. The polypeptide is Deoxyribose-phosphate aldolase (Mycoplasmopsis pulmonis (strain UAB CTIP) (Mycoplasma pulmonis)).